A 242-amino-acid polypeptide reads, in one-letter code: MLLGVNIDHIATVRNARGTTYPSPVEAALVAETHGADLITMHLREDRRHIKDADVFAVKNAIRTRLNLEMALTEEMLENALKVMPEDVCIVPEKRQEITTEGGLDVLAQQDKIAEFTKILTDAGIRVSLFIDADDRQIQAARDVGAPVVELHTGAYADARSHAEQIRQFERIQNGAHFASDLGLVVNAGHGLTIHNVTPIAQILAIRELNIGHSLISQALFLGLPEAVRQMKEAMFRARLLP.

Position 6 (asparagine 6) interacts with 3-amino-2-oxopropyl phosphate. Aspartate 8–histidine 9 serves as a coordination point for 1-deoxy-D-xylulose 5-phosphate. Position 17 (arginine 17) interacts with 3-amino-2-oxopropyl phosphate. Catalysis depends on histidine 42, which acts as the Proton acceptor. Residues arginine 44 and histidine 49 each coordinate 1-deoxy-D-xylulose 5-phosphate. The active-site Proton acceptor is the glutamate 69. Residue threonine 99 participates in 1-deoxy-D-xylulose 5-phosphate binding. Histidine 190 functions as the Proton donor in the catalytic mechanism. Residues glycine 191 and glycine 212 to histidine 213 each bind 3-amino-2-oxopropyl phosphate.

This sequence belongs to the PNP synthase family. In terms of assembly, homooctamer; tetramer of dimers.

It localises to the cytoplasm. The catalysed reaction is 3-amino-2-oxopropyl phosphate + 1-deoxy-D-xylulose 5-phosphate = pyridoxine 5'-phosphate + phosphate + 2 H2O + H(+). It functions in the pathway cofactor biosynthesis; pyridoxine 5'-phosphate biosynthesis; pyridoxine 5'-phosphate from D-erythrose 4-phosphate: step 5/5. Catalyzes the complicated ring closure reaction between the two acyclic compounds 1-deoxy-D-xylulose-5-phosphate (DXP) and 3-amino-2-oxopropyl phosphate (1-amino-acetone-3-phosphate or AAP) to form pyridoxine 5'-phosphate (PNP) and inorganic phosphate. This Neisseria meningitidis serogroup A / serotype 4A (strain DSM 15465 / Z2491) protein is Pyridoxine 5'-phosphate synthase.